We begin with the raw amino-acid sequence, 178 residues long: Oligoribonuclease (178 aa).

The Exonuclease domain maps to 7-168 (LIWIDLEMTG…DDIRESIAEL (162 aa)). Y128 is a catalytic residue.

Belongs to the oligoribonuclease family.

Its subcellular location is the cytoplasm. Functionally, 3'-to-5' exoribonuclease specific for small oligoribonucleotides. This chain is Oligoribonuclease, found in Pseudomonas savastanoi pv. phaseolicola (strain 1448A / Race 6) (Pseudomonas syringae pv. phaseolicola (strain 1448A / Race 6)).